A 378-amino-acid chain; its full sequence is Chaperone protein DnaJ (378 aa).

The region spanning 5-70 (DFYEVLGLSK…QKRAAYDQYG (66 aa)) is the J domain. The CR-type zinc-finger motif lies at 133-211 (GITKEIRIPT…CHGDGRVERY (79 aa)). Zn(2+) contacts are provided by C146, C149, C163, C166, C185, C188, C199, and C202. 4 CXXCXGXG motif repeats span residues 146–153 (CDKCHGSG), 163–170 (CSTCHGAG), 185–192 (CPTCHGRG), and 199–206 (CSKCHGDG).

This sequence belongs to the DnaJ family. Homodimer. Zn(2+) is required as a cofactor.

The protein resides in the cytoplasm. Participates actively in the response to hyperosmotic and heat shock by preventing the aggregation of stress-denatured proteins and by disaggregating proteins, also in an autonomous, DnaK-independent fashion. Unfolded proteins bind initially to DnaJ; upon interaction with the DnaJ-bound protein, DnaK hydrolyzes its bound ATP, resulting in the formation of a stable complex. GrpE releases ADP from DnaK; ATP binding to DnaK triggers the release of the substrate protein, thus completing the reaction cycle. Several rounds of ATP-dependent interactions between DnaJ, DnaK and GrpE are required for fully efficient folding. Also involved, together with DnaK and GrpE, in the DNA replication of plasmids through activation of initiation proteins. The polypeptide is Chaperone protein DnaJ (Proteus mirabilis (strain HI4320)).